The chain runs to 152 residues: Transcriptional regulator MraZ (152 aa).

SpoVT-AbrB domains are found at residues 5 to 52 (ATMV…PLPE) and 81 to 124 (ASEC…DEQT).

The protein belongs to the MraZ family. In terms of assembly, forms oligomers.

The protein resides in the cytoplasm. The protein localises to the nucleoid. In terms of biological role, negatively regulates its own expression and that of the subsequent genes in the proximal part of the division and cell wall (dcw) gene cluster. Acts by binding directly to DNA. May also regulate the expression of genes outside the dcw cluster. The polypeptide is Transcriptional regulator MraZ (Yersinia pestis bv. Antiqua (strain Antiqua)).